Reading from the N-terminus, the 404-residue chain is CCA-adding enzyme (404 aa).

Positions 27 and 30 each coordinate ATP. Positions 27 and 30 each coordinate CTP. Residues aspartate 40 and aspartate 42 each contribute to the Mg(2+) site. Residues arginine 111, aspartate 154, arginine 157, arginine 160, and arginine 163 each contribute to the ATP site. Arginine 111, aspartate 154, arginine 157, arginine 160, and arginine 163 together coordinate CTP.

This sequence belongs to the tRNA nucleotidyltransferase/poly(A) polymerase family. Bacterial CCA-adding enzyme type 3 subfamily. Homodimer. Requires Mg(2+) as cofactor.

The enzyme catalyses a tRNA precursor + 2 CTP + ATP = a tRNA with a 3' CCA end + 3 diphosphate. It catalyses the reaction a tRNA with a 3' CCA end + 2 CTP + ATP = a tRNA with a 3' CCACCA end + 3 diphosphate. In terms of biological role, catalyzes the addition and repair of the essential 3'-terminal CCA sequence in tRNAs without using a nucleic acid template. Adds these three nucleotides in the order of C, C, and A to the tRNA nucleotide-73, using CTP and ATP as substrates and producing inorganic pyrophosphate. tRNA 3'-terminal CCA addition is required both for tRNA processing and repair. Also involved in tRNA surveillance by mediating tandem CCA addition to generate a CCACCA at the 3' terminus of unstable tRNAs. While stable tRNAs receive only 3'-terminal CCA, unstable tRNAs are marked with CCACCA and rapidly degraded. In Geobacillus sp. (strain WCH70), this protein is CCA-adding enzyme.